The chain runs to 471 residues: GTPase Der (471 aa).

EngA-type G domains lie at 3 to 166 and 177 to 350; these read PTLA…EPEA and IKLA…SSAT. Residues 9–16, 56–60, 118–121, 183–190, 230–234, and 295–298 contribute to the GTP site; these read GRPNVGKS, DTGGI, NKVD, DTAGV, and NKWD. The 85-residue stretch at 351–435 folds into the KH-like domain; it reads EKLNTNFLTK…PIRFEFKSSE (85 aa). Positions 432-471 are disordered; the sequence is KSSENPFAGRKNAMSKKPEHPSRRANSGGKSINRRPRPKS.

This sequence belongs to the TRAFAC class TrmE-Era-EngA-EngB-Septin-like GTPase superfamily. EngA (Der) GTPase family. In terms of assembly, associates with the 50S ribosomal subunit.

Its function is as follows. GTPase that plays an essential role in the late steps of ribosome biogenesis. The protein is GTPase Der of Saccharophagus degradans (strain 2-40 / ATCC 43961 / DSM 17024).